A 417-amino-acid chain; its full sequence is Dibenzothiophene monooxygenase (417 aa).

The helical N-terminus stretch occupies residues 19–125 (DPVAVARGLA…LYTQIAQNNW (107 aa)). FMN is bound by residues tyrosine 96, 129 to 134 (NASSEN), 159 to 163 (KHFCS), arginine 282, 369 to 370 (AR), and histidine 391. The tract at residues 126–234 (WTGNASSENN…VEPDEVLGAP (109 aa)) is central beta-barrel N-terminus. Residues 131-142 (SSENNSHELDVK) are lid loop. Residues 235–409 (NAFVLAFIQS…DVGKHTLNGQ (175 aa)) are helical C-terminus.

The protein belongs to the DszC flavin monooxygenase family. As to quaternary structure, homotetramer.

Its subcellular location is the cytoplasm. It catalyses the reaction dibenzothiophene + 2 FMNH2 + 2 O2 = dibenzothiophene 5,5-dioxide + 2 FMN + 2 H2O + 2 H(+). It carries out the reaction dibenzothiophene + FMNH2 + O2 = dibenzothiophene 5-oxide + FMN + H2O + H(+). The catalysed reaction is dibenzothiophene 5-oxide + FMNH2 + O2 = dibenzothiophene 5,5-dioxide + FMN + H2O + H(+). It functions in the pathway sulfur metabolism; dibenzothiophene degradation. Functionally, catalyzes the first step of the '4S' desulfurization pathway that removes covalently bound sulfur from dibenzothiophene (DBT) without breaking carbon-carbon bonds. Sulfur dioxygenase which converts DBT to DBT-sulfone (DBTO2 or DBT 5,5-dioxide) in a stepwise manner. The chain is Dibenzothiophene monooxygenase from Rhodococcus erythropolis (Arthrobacter picolinophilus).